The sequence spans 352 residues: Maleylacetate reductase (352 aa).

It belongs to the iron-containing alcohol dehydrogenase family.

The catalysed reaction is 3-oxoadipate + NAD(+) = maleylacetate + NADH + H(+). It carries out the reaction 3-oxoadipate + NADP(+) = maleylacetate + NADPH + H(+). The protein operates within xenobiotic degradation; (2,4,5-trichlorophenoxy)acetate degradation. The sequence is that of Maleylacetate reductase (tftE) from Burkholderia cepacia (Pseudomonas cepacia).